The following is a 96-amino-acid chain: Methanol dehydrogenase [cytochrome c] subunit 2 (96 aa).

The first 22 residues, 1 to 22, serve as a signal peptide directing secretion; sequence MKTTLIAAAIVALSGLAAPALA. Residues C28 and C34 are joined by a disulfide bond. Residues 45–75 are disordered; the sequence is IAGSKYDPKHDPKELNKQADSIKQMEERNKK. Positions 50-61 are enriched in basic and acidic residues; it reads YDPKHDPKELNK.

Belongs to the methanol dehydrogenase subunit 2 family. As to quaternary structure, heterotetramer composed of 2 alpha and 2 beta subunits.

Its subcellular location is the periplasm. It carries out the reaction 2 Fe(III)-[cytochrome cL] + a primary alcohol = 2 Fe(II)-[cytochrome cL] + an aldehyde + 2 H(+). In terms of biological role, catalyzes the oxidation of primary alcohols including methanol. The sequence is that of Methanol dehydrogenase [cytochrome c] subunit 2 (moxI) from Methylorubrum extorquens (strain ATCC 14718 / DSM 1338 / JCM 2805 / NCIMB 9133 / AM1) (Methylobacterium extorquens).